Reading from the N-terminus, the 216-residue chain is Ras-related protein YPTC6 (216 aa).

19–26 is a GTP binding site; sequence GDSGVGKS. Residues 41-49 carry the Effector region motif; sequence SKSTIGVEF. GTP is bound by residues 67-71 and 125-128; these read DTAGQ and NKSD. Residues Cys-214 and Cys-215 are each lipidated (S-geranylgeranyl cysteine).

The protein belongs to the small GTPase superfamily. Rab family.

Its subcellular location is the cell membrane. The polypeptide is Ras-related protein YPTC6 (YPTC6) (Chlamydomonas reinhardtii (Chlamydomonas smithii)).